The primary structure comprises 270 residues: uncharacterized protein (270 aa).

Disordered regions lie at residues Ile35–Lys67 and Ser168–Asn204. The segment covering Asn39–Asn48 has biased composition (low complexity). Polar residues predominate over residues Val49–Lys67. Low complexity predominate over residues Ser168–Asn191.

This is an uncharacterized protein from Dictyostelium discoideum (Social amoeba).